A 416-amino-acid chain; its full sequence is UDP-N-acetylglucosamine 1-carboxyvinyltransferase (416 aa).

22-23 lines the phosphoenolpyruvate pocket; it reads KN. Arg91 is a UDP-N-acetyl-alpha-D-glucosamine binding site. The Proton donor role is filled by Cys115. Cys115 carries the post-translational modification 2-(S-cysteinyl)pyruvic acid O-phosphothioketal. Residues 120–124, Asp305, and Ile327 contribute to the UDP-N-acetyl-alpha-D-glucosamine site; that span reads RPIDL.

Belongs to the EPSP synthase family. MurA subfamily.

It is found in the cytoplasm. It catalyses the reaction phosphoenolpyruvate + UDP-N-acetyl-alpha-D-glucosamine = UDP-N-acetyl-3-O-(1-carboxyvinyl)-alpha-D-glucosamine + phosphate. The protein operates within cell wall biogenesis; peptidoglycan biosynthesis. Functionally, cell wall formation. Adds enolpyruvyl to UDP-N-acetylglucosamine. The chain is UDP-N-acetylglucosamine 1-carboxyvinyltransferase from Buchnera aphidicola subsp. Acyrthosiphon pisum (strain APS) (Acyrthosiphon pisum symbiotic bacterium).